The sequence spans 394 residues: MNKKTVRDIDVKGKRVFCRVDFNVPMQNGVVTDDTRIRAALPTIQYLMEQGAKVILASHLGRPKGKVVEEMRLNAVAERLSELLGKRVVKTDEAYGDTVKAAIAEMNEGDVLLLENVRFYPGEEKNDPELAKAFAELADVYVNDAFGAAHRAHASTEGIAHHLPAVAGFLMEKEIEVLGKALSNPDRPFTAIIGGAKVKDKIGVIENLLDKVDNLIIGGGLAYTFVKALGHEIGKSLLEEDKIDLAKSFMEKAKEKGVNFYMPVDAVVADDFSNDANKKVVNIDEIPSDWEGLDIGPKTRELYRDVILKSKLVIWNGPMGVFEMDAFAEGTKAVAQALADAKDTYTVIGGGDSAAAVEKFGLANKMDHISTGGGASLEFMEGKQLPGVVALNDK.

Residues 21–23, R36, 59–62, R118, and R151 each bind substrate; these read DFN and HLGR. Residue S183 is modified to Phosphoserine. 2 residues coordinate ATP: K201 and G292. T299 carries the post-translational modification Phosphothreonine. ATP is bound by residues E323 and 350–353; that span reads GGDS.

The protein belongs to the phosphoglycerate kinase family. As to quaternary structure, monomer.

The protein resides in the cytoplasm. It catalyses the reaction (2R)-3-phosphoglycerate + ATP = (2R)-3-phospho-glyceroyl phosphate + ADP. It functions in the pathway carbohydrate degradation; glycolysis; pyruvate from D-glyceraldehyde 3-phosphate: step 2/5. This chain is Phosphoglycerate kinase, found in Anoxybacillus flavithermus (strain DSM 21510 / WK1).